We begin with the raw amino-acid sequence, 99 residues long: Aspartyl/glutamyl-tRNA(Asn/Gln) amidotransferase subunit C (99 aa).

The protein belongs to the GatC family. As to quaternary structure, heterotrimer of A, B and C subunits.

The catalysed reaction is L-glutamyl-tRNA(Gln) + L-glutamine + ATP + H2O = L-glutaminyl-tRNA(Gln) + L-glutamate + ADP + phosphate + H(+). The enzyme catalyses L-aspartyl-tRNA(Asn) + L-glutamine + ATP + H2O = L-asparaginyl-tRNA(Asn) + L-glutamate + ADP + phosphate + 2 H(+). Allows the formation of correctly charged Asn-tRNA(Asn) or Gln-tRNA(Gln) through the transamidation of misacylated Asp-tRNA(Asn) or Glu-tRNA(Gln) in organisms which lack either or both of asparaginyl-tRNA or glutaminyl-tRNA synthetases. The reaction takes place in the presence of glutamine and ATP through an activated phospho-Asp-tRNA(Asn) or phospho-Glu-tRNA(Gln). This is Aspartyl/glutamyl-tRNA(Asn/Gln) amidotransferase subunit C from Burkholderia ambifaria (strain MC40-6).